The sequence spans 160 residues: Protein-export protein SecB (160 aa).

This sequence belongs to the SecB family. In terms of assembly, homotetramer, a dimer of dimers. One homotetramer interacts with 1 SecA dimer.

Its subcellular location is the cytoplasm. One of the proteins required for the normal export of preproteins out of the cell cytoplasm. It is a molecular chaperone that binds to a subset of precursor proteins, maintaining them in a translocation-competent state. It also specifically binds to its receptor SecA. This Rhodospirillum rubrum (strain ATCC 11170 / ATH 1.1.1 / DSM 467 / LMG 4362 / NCIMB 8255 / S1) protein is Protein-export protein SecB.